The sequence spans 320 residues: Malate dehydrogenase (320 aa).

Residues 10 to 15 and aspartate 34 contribute to the NAD(+) site; that span reads GSGMIG. Residues arginine 83 and arginine 89 each contribute to the substrate site. NAD(+) is bound by residues asparagine 96 and 119–121; that span reads ITN. Substrate contacts are provided by asparagine 121 and arginine 152. Histidine 176 acts as the Proton acceptor in catalysis.

Belongs to the LDH/MDH superfamily. MDH type 3 family.

The catalysed reaction is (S)-malate + NAD(+) = oxaloacetate + NADH + H(+). Functionally, catalyzes the reversible oxidation of malate to oxaloacetate. The chain is Malate dehydrogenase from Bartonella henselae (strain ATCC 49882 / DSM 28221 / CCUG 30454 / Houston 1) (Rochalimaea henselae).